The following is a 123-amino-acid chain: UPF0102 protein DR_2282 (123 aa).

It belongs to the UPF0102 family.

In Deinococcus radiodurans (strain ATCC 13939 / DSM 20539 / JCM 16871 / CCUG 27074 / LMG 4051 / NBRC 15346 / NCIMB 9279 / VKM B-1422 / R1), this protein is UPF0102 protein DR_2282.